A 195-amino-acid chain; its full sequence is Large ribosomal subunit protein uL18 (195 aa).

It belongs to the universal ribosomal protein uL18 family. As to quaternary structure, part of the 50S ribosomal subunit. Contacts the 5S and 23S rRNAs.

In terms of biological role, this is one of the proteins that bind and probably mediate the attachment of the 5S RNA into the large ribosomal subunit, where it forms part of the central protuberance. The protein is Large ribosomal subunit protein uL18 of Methanocaldococcus jannaschii (strain ATCC 43067 / DSM 2661 / JAL-1 / JCM 10045 / NBRC 100440) (Methanococcus jannaschii).